Reading from the N-terminus, the 706-residue chain is Double-strand break repair protein MRE11 (706 aa).

At Ser-2 the chain carries N-acetylserine. Phosphoserine is present on Ser-2. 3 residues coordinate Mn(2+): Asp-20, His-22, and Asp-60. Positions 87–117 (RPVQFEVISDQSVNFGFSKFPWVNYQDGNLN) are interaction with NBN. Asn-128 contacts Mn(2+). His-129 functions as the Proton donor in the catalytic mechanism. 3 residues coordinate Mn(2+): His-217, His-245, and His-247. Lys-255 is covalently cross-linked (Glycyl lysine isopeptide (Lys-Gly) (interchain with G-Cter in SUMO2)). Position 275 is a phosphoserine (Ser-275). Lys-282 is covalently cross-linked (Glycyl lysine isopeptide (Lys-Gly) (interchain with G-Cter in UFM1)). A Glycyl lysine isopeptide (Lys-Gly) (interchain with G-Cter in ubiquitin) cross-link involves residue Lys-339. Residues Lys-384 and Lys-468 each participate in a glycyl lysine isopeptide (Lys-Gly) (interchain with G-Cter in SUMO) cross-link. Lys-481 is covalently cross-linked (Glycyl lysine isopeptide (Lys-Gly) (interchain with G-Cter in ubiquitin)). Over residues 505-514 (FRESRQRNTN) the composition is skewed to basic and acidic residues. The interval 505–706 (FRESRQRNTN…SSSCPRRNRR (202 aa)) is disordered. Residues 531–541 (RSQSETSTSAF) show a composition bias toward polar residues. Residues 569–579 (GRGRGRGRRGA) are compositionally biased toward basic residues. Arg-570, Arg-572, Arg-574, Arg-576, Arg-577, Arg-580, Arg-587, Arg-592, and Arg-594 each carry asymmetric dimethylarginine. The short motif at 570–594 (RGRGRGRRGARGQSSAPRGGSQRGR) is the GAR element. The segment covering 580 to 589 (RGQSSAPRGG) has biased composition (low complexity). Residues 603-617 (RGRSSKATSSTSRNM) are compositionally biased toward polar residues. Residues Ser-618, Ser-640, and Ser-648 each carry the phosphoserine modification. Over residues 643–653 (IEVDDSDEDDI) the composition is skewed to acidic residues. The segment covering 655 to 679 (PTNSRADQRWSGTTSSKRMSQSQTA) has biased composition (polar residues). The residue at position 671 (Lys-671) is an N6-lactoyllysine. Phosphoserine is present on residues Ser-674, Ser-676, Ser-686, and Ser-699. Over residues 684 to 694 (FESDEDDDDDP) the composition is skewed to acidic residues.

Belongs to the MRE11/RAD32 family. In terms of assembly, component of the MRN complex composed of two heterodimers RAD50 and MRE11 associated with a single NBN. The MRN complexes dimerize on DNA to form joined MRN-MRN oligomers required for DNA double-strand break repair. As part of the MRN complex, interacts with MCM9; the interaction recruits the complex to DNA repair sites. Component of the BASC complex, at least composed of BRCA1, MSH2, MSH6, MLH1, ATM, BLM, RAD50, MRE11 and NBN. Found in a complex with TERF2. Interacts with DCLRE1C/Artemis and DCLRE1B/Apollo. Interacts with ATF2. Interacts with EXD2. Interacts with MRNIP. Interacts with SAMHD1; leading to stimulate 3'-5' exonuclease activity. Interacts (when ubiquitinated) with UBQLN4 (via its UBA domain). Interacts with CYREN (via XLF motif). Interacts with GFI1; promoting methylation by PRMT1. Interacts with DYNLL1; inhibiting the activity of MRE11. Interacts with C1QBP and RAD50; interaction takes place in absence of DNA damage to form the MRC (MRE11-RAD50-C1QBP) complex that inhibits the activity of MRE11. Interacts with AGER/RAGE; AGER is recruited to DNA double-strand break sites where it enhances MRE11 endonuclease activity to promote DNA repair. It depends on Mn(2+) as a cofactor. Phosphorylated by ATM at Ser-674 and Ser-676 in response to DNA damage, promoting MRE11 activity: phosphorylation activates MRE11 by preventing the interaction between MRE11 and the C1QBP inhibitor. Phosphorylation at Ser-648 by PLK1 primes for phosphorylation at Ser-686 by CK2, inhibiting recruitment of the MRN complex to DNA damage sites. Post-translationally, asymmetric dimethylation by PRMT1 promotes MRE11 exonuclease activity. In terms of processing, lactylation at Lys-671 by CREBBP/CBP in response to DNA damage promotes DNA binding and MRE11 activity. Acetylated on lysine residues by KAT2A /GCN5. Post-translationally, ubiquitinated following DNA damage. Ubiquitination triggers interaction with UBQLN4, leading to MRE11 removal from chromatin and degradation by the proteasome. Ubiquitinated at Lys-339 and Lys-481 by RNF126 via 'Lys-27'- and 'Lys-29'-linked polyubiquitin chains, promoting the exonuclease activity of MRE11. In terms of processing, SUMOylated by PIAS1, stabilizing MRE11 on chromatin during end resection. DeSUMOylated by SENP3 following removal from DNA double-strand breaks (DSBs). Ufmylation at Lys-282 promotes MRE11 activity and is required for activation of the ATM and ATR kinases by the MRN complex.

Its subcellular location is the nucleus. The protein localises to the chromosome. It localises to the telomere. Interaction with SAMHD1 stimulates the double-strand-specific 3'-5' exonuclease activity. RBBP8/CtIP specifically promotes the endonuclease activity to clear protein-DNA adducts and generate clean double-strand break ends. DYNLL1-binding inhibits the activity of MRE11. MRE11 activity is inhibited by C1QBP: in absence of DNA damage, C1QBP interacts with unphosphorylated MRE11, preventing formation and activity of the MRN complex. Functionally, core component of the MRN complex, which plays a central role in double-strand break (DSB) repair, DNA recombination, maintenance of telomere integrity and meiosis. The MRN complex is involved in the repair of DNA double-strand breaks (DSBs) via homologous recombination (HR), an error-free mechanism which primarily occurs during S and G2 phases. The complex (1) mediates the end resection of damaged DNA, which generates proper single-stranded DNA, a key initial steps in HR, and is (2) required for the recruitment of other repair factors and efficient activation of ATM and ATR upon DNA damage. Within the MRN complex, MRE11 possesses both single-strand endonuclease activity and double-strand-specific 3'-5' exonuclease activity. After DSBs, MRE11 is loaded onto DSBs sites and cleaves DNA by cooperating with RBBP8/CtIP to initiate end resection. MRE11 first endonucleolytically cleaves the 5' strand at DNA DSB ends to prevent non-homologous end joining (NHEJ) and licence HR. It then generates a single-stranded DNA gap via 3' to 5' exonucleolytic degradation to create entry sites for EXO1- and DNA2-mediated 5' to 3' long-range resection, which is required for single-strand invasion and recombination. RBBP8/CtIP specifically promotes the endonuclease activity of MRE11 to clear protein-DNA adducts and generate clean double-strand break ends. MRE11 endonuclease activity is also enhanced by AGER/RAGE. The MRN complex is also required for DNA damage signaling via activation of the ATM and ATR kinases: the nuclease activity of MRE11 is not required to activate ATM and ATR. The MRN complex is also required for the processing of R-loops. The MRN complex is involved in the activation of the cGAS-STING pathway induced by DNA damage during tumorigenesis: the MRN complex acts by displacing CGAS from nucleosome sequestration, thereby activating it. In telomeres the MRN complex may modulate t-loop formation. In Mus musculus (Mouse), this protein is Double-strand break repair protein MRE11.